Consider the following 430-residue polypeptide: Enolase (430 aa).

Gln-167 contacts (2R)-2-phosphoglycerate. The active-site Proton donor is Glu-209. Residues Asp-246, Glu-287, and Asp-314 each contribute to the Mg(2+) site. (2R)-2-phosphoglycerate-binding residues include Lys-339, Arg-368, Ser-369, and Lys-390. Catalysis depends on Lys-339, which acts as the Proton acceptor.

It belongs to the enolase family. The cofactor is Mg(2+).

It localises to the cytoplasm. The protein localises to the secreted. It is found in the cell surface. The catalysed reaction is (2R)-2-phosphoglycerate = phosphoenolpyruvate + H2O. It participates in carbohydrate degradation; glycolysis; pyruvate from D-glyceraldehyde 3-phosphate: step 4/5. In terms of biological role, catalyzes the reversible conversion of 2-phosphoglycerate (2-PG) into phosphoenolpyruvate (PEP). It is essential for the degradation of carbohydrates via glycolysis. This Prochlorococcus marinus (strain MIT 9515) protein is Enolase.